The chain runs to 324 residues: Putative ribose-phosphate pyrophosphokinase 2 (324 aa).

ATP contacts are provided by residues 43–45 (DGE) and 102–103 (RQ). Mg(2+) is bound at residue histidine 136. Residues aspartate 225 and 229–233 (NTGKT) contribute to the D-ribose 5-phosphate site.

This sequence belongs to the ribose-phosphate pyrophosphokinase family. Class I subfamily. As to quaternary structure, homohexamer. It depends on Mg(2+) as a cofactor.

It is found in the cytoplasm. It catalyses the reaction D-ribose 5-phosphate + ATP = 5-phospho-alpha-D-ribose 1-diphosphate + AMP + H(+). It participates in metabolic intermediate biosynthesis; 5-phospho-alpha-D-ribose 1-diphosphate biosynthesis; 5-phospho-alpha-D-ribose 1-diphosphate from D-ribose 5-phosphate (route I): step 1/1. Functionally, involved in the biosynthesis of the central metabolite phospho-alpha-D-ribosyl-1-pyrophosphate (PRPP) via the transfer of pyrophosphoryl group from ATP to 1-hydroxyl of ribose-5-phosphate (Rib-5-P). The protein is Putative ribose-phosphate pyrophosphokinase 2 of Streptococcus agalactiae serotype III (strain NEM316).